The primary structure comprises 353 residues: Phosphate acyltransferase (353 aa).

The protein belongs to the PlsX family. Homodimer. Probably interacts with PlsY.

It is found in the cytoplasm. The enzyme catalyses a fatty acyl-[ACP] + phosphate = an acyl phosphate + holo-[ACP]. It functions in the pathway lipid metabolism; phospholipid metabolism. In terms of biological role, catalyzes the reversible formation of acyl-phosphate (acyl-PO(4)) from acyl-[acyl-carrier-protein] (acyl-ACP). This enzyme utilizes acyl-ACP as fatty acyl donor, but not acyl-CoA. The sequence is that of Phosphate acyltransferase from Rhodopseudomonas palustris (strain HaA2).